Consider the following 178-residue polypeptide: Large ribosomal subunit protein uL6 (178 aa).

Belongs to the universal ribosomal protein uL6 family. In terms of assembly, part of the 50S ribosomal subunit.

In terms of biological role, this protein binds to the 23S rRNA, and is important in its secondary structure. It is located near the subunit interface in the base of the L7/L12 stalk, and near the tRNA binding site of the peptidyltransferase center. In Campylobacter curvus (strain 525.92), this protein is Large ribosomal subunit protein uL6.